The sequence spans 405 residues: Acetate kinase (405 aa).

Asparagine 7 is a binding site for Mg(2+). Residue lysine 14 participates in ATP binding. Residue arginine 98 participates in substrate binding. Aspartate 155 acts as the Proton donor/acceptor in catalysis. Residues histidine 215–glycine 219, aspartate 289–arginine 291, and glycine 337–asparagine 341 contribute to the ATP site. Position 391 (glutamate 391) interacts with Mg(2+).

This sequence belongs to the acetokinase family. As to quaternary structure, homodimer. Mg(2+) serves as cofactor. Mn(2+) is required as a cofactor.

It is found in the cytoplasm. The enzyme catalyses acetate + ATP = acetyl phosphate + ADP. It participates in metabolic intermediate biosynthesis; acetyl-CoA biosynthesis; acetyl-CoA from acetate: step 1/2. In terms of biological role, catalyzes the formation of acetyl phosphate from acetate and ATP. Can also catalyze the reverse reaction. The protein is Acetate kinase of Desulfotalea psychrophila (strain LSv54 / DSM 12343).